A 96-amino-acid chain; its full sequence is Co-chaperonin GroES 1 (96 aa).

This sequence belongs to the GroES chaperonin family. Heptamer of 7 subunits arranged in a ring. Interacts with the chaperonin GroEL.

Its subcellular location is the cytoplasm. Together with the chaperonin GroEL, plays an essential role in assisting protein folding. The GroEL-GroES system forms a nano-cage that allows encapsulation of the non-native substrate proteins and provides a physical environment optimized to promote and accelerate protein folding. GroES binds to the apical surface of the GroEL ring, thereby capping the opening of the GroEL channel. This chain is Co-chaperonin GroES 1, found in Vibrio cholerae serotype O1 (strain ATCC 39315 / El Tor Inaba N16961).